Here is a 107-residue protein sequence, read N- to C-terminus: uncharacterized protein (107 aa).

The disordered stretch occupies residues Lys-87–Trp-107.

This is an uncharacterized protein from Saccharomyces cerevisiae (strain ATCC 204508 / S288c) (Baker's yeast).